Consider the following 184-residue polypeptide: MSLRKINFVTGNVKKLEEVKAILKNFEVSNVDVDLDEFQGEPEFIAERKCREAVEAVKGPVLVEDTSLCFNAMGGLPGPYIKWFLKNLKPEGLHNMLAGFSDKTAYAQCIFAYTEGLGKPIHVFAGKCPGQIVAPRGDTAFGWDPCFQPDGFKETFGEMDKDVKNEISHRAKALELLKEYFQNN.

10 to 15 serves as a coordination point for ITP; that stretch reads TGNVKK. Glutamate 37 contacts Mg(2+). ITP is bound by residues lysine 49, 65 to 66, lysine 82, 141 to 144, lysine 164, and 169 to 170; these read DT, FGWD, and HR.

Belongs to the HAM1 NTPase family. Homodimer. Mg(2+) is required as a cofactor. Mn(2+) serves as cofactor.

The protein localises to the cytoplasm. The enzyme catalyses ITP + H2O = IMP + diphosphate + H(+). It catalyses the reaction dITP + H2O = dIMP + diphosphate + H(+). The catalysed reaction is XTP + H2O = XMP + diphosphate + H(+). Pyrophosphatase that hydrolyzes non-canonical purine nucleotides such as inosine triphosphate (ITP), deoxyinosine triphosphate (dITP) or xanthosine 5'-triphosphate (XTP) to their respective monophosphate derivatives. The enzyme does not distinguish between the deoxy- and ribose forms. Probably excludes non-canonical purines from RNA and DNA precursor pools, thus preventing their incorporation into RNA and DNA and avoiding chromosomal lesions. This is Inosine triphosphate pyrophosphatase from Caenorhabditis elegans.